A 1137-amino-acid polypeptide reads, in one-letter code: DNA-directed RNA polymerase III subunit RPC2 (1137 aa).

The C4-type zinc finger occupies Asp1084–His1099. 4 residues coordinate Zn(2+): Cys1086, Cys1089, Cys1098, and Cys1101.

The protein belongs to the RNA polymerase beta chain family. In terms of assembly, component of the RNA polymerase III (Pol III) complex consisting of 17 subunits.

Its subcellular location is the nucleus. The catalysed reaction is RNA(n) + a ribonucleoside 5'-triphosphate = RNA(n+1) + diphosphate. DNA-dependent RNA polymerase catalyzes the transcription of DNA into RNA using the four ribonucleoside triphosphates as substrates. Second largest core component of RNA polymerase III which synthesizes small RNAs, such as 5S rRNA and tRNAs. Proposed to contribute to the polymerase catalytic activity and forms the polymerase active center together with the largest subunit. Pol III is composed of mobile elements and Polr3B is part of the core element with the central large cleft and probably a clamp element that moves to open and close the cleft. The chain is DNA-directed RNA polymerase III subunit RPC2 from Drosophila melanogaster (Fruit fly).